The sequence spans 141 residues: LOB domain-containing protein 34 (141 aa).

Positions 16–119 (NQCAACRHQR…SPLNYVAPVI (104 aa)) constitute an LOB domain.

It belongs to the LOB domain-containing protein family.

The sequence is that of LOB domain-containing protein 34 (LBD34) from Arabidopsis thaliana (Mouse-ear cress).